Here is a 551-residue protein sequence, read N- to C-terminus: Delta-selinene synthase TPS7FN (551 aa).

Positions 266, 303, 307, 444, and 447 each coordinate (2E,6E)-farnesyl diphosphate. Mg(2+)-binding residues include Asp303 and Asp307. The short motif at 303-307 is the DDXXD motif element; sequence DDIYD. Residues Asp447, Ser451, and Glu455 each contribute to the Mg(2+) site.

The protein belongs to the terpene synthase family. Tpsb subfamily. Mg(2+) serves as cofactor. Mn(2+) is required as a cofactor.

The catalysed reaction is (2E,6E)-farnesyl diphosphate = delta-selinene + diphosphate. The enzyme catalyses (2E)-geranyl diphosphate = beta-myrcene + diphosphate. It catalyses the reaction (2E)-geranyl diphosphate = (4S)-limonene + diphosphate. It carries out the reaction (2E,6E)-farnesyl diphosphate + H2O = selina-6-en-4-ol + diphosphate. It functions in the pathway secondary metabolite biosynthesis; terpenoid biosynthesis. Its function is as follows. Involved in sesquiterpene olefins biosynthesis, constituants of cannabinoids and terpenoids-rich resins. Catalyzes mainly the conversion of (2E)-farnesyl diphosphate to delta-selinene, and also produces minor products such as selina-6-en-4-ol. Can also use (2E)-geranyl diphosphate as substrate with low efficiency, producing minor amounts of myrcene and limonene. This chain is Delta-selinene synthase TPS7FN, found in Cannabis sativa (Hemp).